A 756-amino-acid chain; its full sequence is Serine/threonine-protein kinase tousled-like 1-B (756 aa).

2 stretches are compositionally biased toward low complexity: residues 1–12 and 23–34; these read MSVQSNSNSSGS and STGSPTPGSVSP. Disordered regions lie at residues 1 to 56 and 69 to 185; these read MSVQ…LDPR and VSGN…QNSS. A compositionally biased stretch (basic and acidic residues) spans 45 to 56; sequence EGMDELHSLDPR. The span at 72–85 shows a compositional bias: gly residues; sequence NTGGSTGSASGGPK. Over residues 93–103 the composition is skewed to low complexity; it reads SSHSFGSLGSS. Basic and acidic residues predominate over residues 104–120; sequence SDKESETPEKKHFESSR. Positions 243–268 form a coiled coil; it reads DLRRQIDEQQKLLERFKERLNKCTTM. Residues 339–375 are disordered; that stretch reads KLLAKRKPSSTPSSQSPTPNESKQRKTKAVNGADNDP. The segment covering 347 to 357 has biased composition (low complexity); it reads SSTPSSQSPTP. Positions 397-435 form a coiled coil; it reads FKLRLGHLKKEEAEIQAELERLERVRNLHIRELKRINNE. Residues 450-728 enclose the Protein kinase domain; it reads YLLLHLLGRG…VHQLGSDSYL (279 aa). ATP-binding positions include 456 to 464 and lysine 479; that span reads LGRGGFSEV. Residue aspartate 580 is the Proton acceptor of the active site. The tract at residues 734-756 is disordered; it reads RSNSSGNLQATPASPAPSGIISY. The span at 735–745 shows a compositional bias: polar residues; that stretch reads SNSSGNLQATP.

It belongs to the protein kinase superfamily. Ser/Thr protein kinase family. The cofactor is Mg(2+).

It localises to the nucleus. It catalyses the reaction L-seryl-[protein] + ATP = O-phospho-L-seryl-[protein] + ADP + H(+). The enzyme catalyses L-threonyl-[protein] + ATP = O-phospho-L-threonyl-[protein] + ADP + H(+). This Danio rerio (Zebrafish) protein is Serine/threonine-protein kinase tousled-like 1-B (tlk1b).